The primary structure comprises 217 residues: MOB kinase activator 3A (217 aa).

The Zn(2+) site is built by Cys83, Cys88, His165, and His170.

This sequence belongs to the MOB1/phocein family.

May regulate the activity of kinases. This Homo sapiens (Human) protein is MOB kinase activator 3A (MOB3A).